The primary structure comprises 537 residues: Extracellular exo-inulinase inuE (537 aa).

Positions 1–19 (MARLLKAVTVCALAGIAHA) are cleaved as a signal peptide. The active site involves D41. N49, N67, N112, N300, N363, N398, N430, and N531 each carry an N-linked (GlcNAc...) asparagine glycan.

It belongs to the glycosyl hydrolase 32 family.

It localises to the secreted. The catalysed reaction is Hydrolysis of terminal, non-reducing (2-&gt;1)- and (2-&gt;6)-linked beta-D-fructofuranose residues in fructans.. The catalytic activity is increased by manganese cathions, but strongly inhibited by other metal ions such as copper, aluminum, silver, iron, nickel, zinc and magnesium cathions. Its function is as follows. Exo-inulinase involved in utilization of the plant storage polymer inulin, consisting of fructooligosaccharides with a degree of polymerization (DP) value from 2 to 60. Splits off terminal fructose units successively from the non-reducing end of the inulin molecule, and also hydrolyze sucrose and raffinose. The chain is Extracellular exo-inulinase inuE (exoI) from Aspergillus ficuum.